The primary structure comprises 93 residues: UPF0147 protein PH1921.2 (93 aa).

It belongs to the UPF0147 family.

This chain is UPF0147 protein PH1921.2, found in Pyrococcus horikoshii (strain ATCC 700860 / DSM 12428 / JCM 9974 / NBRC 100139 / OT-3).